The sequence spans 321 residues: Olfactory receptor 5K3 (321 aa).

At 1–25 (MNKENHSLIAEFILTGFTYHPKLKT) the chain is on the extracellular side. Residue Asn5 is glycosylated (N-linked (GlcNAc...) asparagine). A helical transmembrane segment spans residues 26 to 46 (VLFVVFFAIYLITMVGNIGLV). The Cytoplasmic segment spans residues 47-56 (ALIYIEQRLH). A helical membrane pass occupies residues 57–77 (TPMYIFLGNLVLMDSCCSSAI). Residues 78-97 (TPKMLENFFSEDKRITLYEC) lie on the Extracellular side of the membrane. Residues Cys97 and Cys179 are joined by a disulfide bond. Residues 98–118 (MAQFYFLCLAETTDCFLLAAM) form a helical membrane-spanning segment. Over 119–143 (AYDCYVAICNPLQYHTMMSKTLCIQ) the chain is Cytoplasmic. The chain crosses the membrane as a helical span at residues 144-164 (MTAGAYLAGNLHPMIEVEFLL). At 165 to 196 (RLTFCGSHQINHFFCDVLPLYRLSCINPYINE) the chain is on the extracellular side. Residues 197-217 (LVLFILAGSIQIFTIVLVSYF) form a helical membrane-spanning segment. At 218–235 (YILFTIFTMKSKEGRGKA) the chain is on the cytoplasmic side. Residues 236-256 (LSTCASHFLSVSIFCDSLLFM) traverse the membrane as a helical segment. The Extracellular segment spans residues 257 to 269 (YARPGAVNEGDKD). Residues 270-290 (IPVAIFYTLVIPLLNPFIYSL) form a helical membrane-spanning segment. Residues 291–321 (RNKEVINIMKKIMKKRKFCHILKQMSSPLAT) lie on the Cytoplasmic side of the membrane.

This sequence belongs to the G-protein coupled receptor 1 family.

The protein localises to the cell membrane. Odorant receptor. This Homo sapiens (Human) protein is Olfactory receptor 5K3 (OR5K3).